The chain runs to 141 residues: Endoribonuclease YbeY (141 aa).

Positions 100, 104, and 110 each coordinate Zn(2+).

This sequence belongs to the endoribonuclease YbeY family. Zn(2+) is required as a cofactor.

It localises to the cytoplasm. Its function is as follows. Single strand-specific metallo-endoribonuclease involved in late-stage 70S ribosome quality control and in maturation of the 3' terminus of the 16S rRNA. The chain is Endoribonuclease YbeY from Helicobacter pylori (strain J99 / ATCC 700824) (Campylobacter pylori J99).